Consider the following 104-residue polypeptide: Protein RnfH (104 aa).

It belongs to the UPF0125 (RnfH) family.

This Pseudomonas fluorescens (strain ATCC BAA-477 / NRRL B-23932 / Pf-5) protein is Protein RnfH.